The following is a 478-amino-acid chain: Calcitonin receptor (478 aa).

The first 22 residues, 1–22, serve as a signal peptide directing secretion; that stretch reads MRFTFTRQFLAFFILISNPASI. The Extracellular segment spans residues 23–146; sequence LPRSENLTFP…FTPEKLQNAY (124 aa). Residues Asn28, Asn73, Asn125, and Asn130 are each glycosylated (N-linked (GlcNAc...) asparagine). 3 cysteine pairs are disulfide-bonded: Cys55–Cys81, Cys72–Cys112, and Cys95–Cys134. The chain crosses the membrane as a helical span at residues 147–169; that stretch reads VLYYLAIVGHSMSIITLVVSLGI. Residues 170–181 are Cytoplasmic-facing; it reads FVYFRSLGCQRV. A helical membrane pass occupies residues 182–202; that stretch reads TLHKNMFLTYILNSMIIIIHL. At 203–219 the chain is on the extracellular side; the sequence is VEVVPNGELVRKDPVSC. Cys219 and Cys289 form a disulfide bridge. A helical transmembrane segment spans residues 220 to 242; it reads KILHFFHQYMMACNYFWMLCEGI. Over 243–259 the chain is Cytoplasmic; it reads YLHTLIVVSVFNEAKHL. The chain crosses the membrane as a helical span at residues 260-280; it reads RWYYLLGWGFPLVPTTIHAIT. At 281 to 296 the chain is on the extracellular side; sequence RALYFNDNCWISVDTH. A helical membrane pass occupies residues 297-320; sequence LLYIIHGPVMVALVVNFFFLLNIV. The Cytoplasmic segment spans residues 321–340; it reads RVLVTKMRETHEAESYMYLK. Residues 341 to 359 form a helical membrane-spanning segment; that stretch reads AVKATMILVPLLGIQFVVF. The Extracellular segment spans residues 360 to 367; the sequence is PWRPSNKV. Residues 368 to 394 form a helical membrane-spanning segment; sequence LGKIYDYFMHSLIHFQGFFVATIYCFC. At 395–478 the chain is on the cytoplasmic side; the sequence is NNEVQTTLKR…LNIIEKESSA (84 aa).

The protein belongs to the G-protein coupled receptor 2 family. In terms of assembly, heterodimer of CALCR and RAMP1, RAMP2 or RAMP3; the receptor complexes function as AMYR1, AMYR2 and AMYR3 receptors, respectively, and respond to amylin/IAPP, calcitonin/CT and CGRP1 ligands. Interacts with GPRASP2.

The protein localises to the cell membrane. In terms of biological role, g protein-coupled receptor activated by ligand peptides amylin (IAPP), calcitonin (CT/CALCA) and calcitonin gene-related peptide type 1 (CGRP1/CALCA). CALCR interacts with receptor-activity-modifying proteins RAMP1, 2 and 3 to form receptor complexes AMYR1, 2 and 3, respectively. IAPP, CT and CGRP1 activate CALCR and AMYRs with distinct modes of receptor activation resulting in specific phenotypes. Ligand binding causes a conformation change that triggers signaling via guanine nucleotide-binding proteins (G proteins) and modulates the activity of downstream effectors. Activates cAMP-dependent pathway. The protein is Calcitonin receptor of Cavia porcellus (Guinea pig).